Here is a 407-residue protein sequence, read N- to C-terminus: Na(+)-translocating NADH-quinone reductase subunit F (407 aa).

Residues 3 to 23 form a helical membrane-spanning segment; the sequence is IILGVVMFTLIVLALTVMILF. One can recognise a 2Fe-2S ferredoxin-type domain in the interval 32-126; sequence GDITVEINED…NLKIELPEEI (95 aa). Residues cysteine 69, cysteine 75, cysteine 78, and cysteine 110 each contribute to the [2Fe-2S] cluster site. In terms of domain architecture, FAD-binding FR-type spans 129–269; sequence VKKWTCEVIS…SGPFGEFFAK (141 aa).

This sequence belongs to the NqrF family. As to quaternary structure, composed of six subunits; NqrA, NqrB, NqrC, NqrD, NqrE and NqrF. The cofactor is [2Fe-2S] cluster. FAD is required as a cofactor.

Its subcellular location is the cell inner membrane. It catalyses the reaction a ubiquinone + n Na(+)(in) + NADH + H(+) = a ubiquinol + n Na(+)(out) + NAD(+). Its function is as follows. NQR complex catalyzes the reduction of ubiquinone-1 to ubiquinol by two successive reactions, coupled with the transport of Na(+) ions from the cytoplasm to the periplasm. The first step is catalyzed by NqrF, which accepts electrons from NADH and reduces ubiquinone-1 to ubisemiquinone by a one-electron transfer pathway. The sequence is that of Na(+)-translocating NADH-quinone reductase subunit F from Yersinia pseudotuberculosis serotype I (strain IP32953).